Consider the following 221-residue polypeptide: MAIIFALVARGTVVLSEFSATSTNASSISKQILEKLPGNDSDSHMSYSQDRYIFHVKRTDGLTVLCMADETAGRNIPFAFLDDIHQRFVKTYGRAIHSAQAYSMNDEFSRVLSQQMEFYSNDPNADRMSRIKGEMSQVRNVMIENIDKVLDRGERLELLVDKTENMQGNTFRFRKQARRYRTIMWWRNVKLTIALILVLALVVYIAMAFVCHGPSLPSCFK.

The residue at position 2 (A2) is an N-acetylalanine. Residues A2–K190 lie on the Cytoplasmic side of the membrane. Residues L7–L112 form the Longin domain. A v-SNARE coiled-coil homology domain is found at R127 to R187. Residues L191 to C211 form a helical; Anchor for type IV membrane protein membrane-spanning segment. Residues H212–K221 lie on the Vesicular side of the membrane.

The protein belongs to the synaptobrevin family. Interacts with subunits of the vacuole protein sorting (HOPS) complex including VPS11, VCL1, VPS18, VPS33, VPS39 and VPS41. As to expression, highly expressed in stems and roots. Detected in flowers and leaves.

The protein resides in the vacuole membrane. It is found in the prevacuolar compartment membrane. Involved in the targeting and/or fusion of transport vesicles to their target membrane. This Arabidopsis thaliana (Mouse-ear cress) protein is Vesicle-associated membrane protein 713.